Reading from the N-terminus, the 302-residue chain is 4-hydroxy-tetrahydrodipicolinate synthase (302 aa).

Residue Thr57 participates in pyruvate binding. The active-site Proton donor/acceptor is the Tyr145. Lys173 functions as the Schiff-base intermediate with substrate in the catalytic mechanism. Ile213 provides a ligand contact to pyruvate.

This sequence belongs to the DapA family. Homotetramer; dimer of dimers.

The protein resides in the cytoplasm. The enzyme catalyses L-aspartate 4-semialdehyde + pyruvate = (2S,4S)-4-hydroxy-2,3,4,5-tetrahydrodipicolinate + H2O + H(+). It functions in the pathway amino-acid biosynthesis; L-lysine biosynthesis via DAP pathway; (S)-tetrahydrodipicolinate from L-aspartate: step 3/4. Its function is as follows. Catalyzes the condensation of (S)-aspartate-beta-semialdehyde [(S)-ASA] and pyruvate to 4-hydroxy-tetrahydrodipicolinate (HTPA). The chain is 4-hydroxy-tetrahydrodipicolinate synthase from Mycolicibacterium gilvum (strain PYR-GCK) (Mycobacterium gilvum (strain PYR-GCK)).